The following is a 702-amino-acid chain: Cadmium, zinc and cobalt-transporting ATPase (702 aa).

Over 1 to 86 (MRLVKQEYVL…HIKKSADDGY (86 aa)) the chain is Cytoplasmic. An HMA domain is found at 4–72 (VKQEYVLDGL…KVKSIDPHVT (69 aa)). Cysteine 15 and cysteine 18 together coordinate Cd(2+). Positions 15 and 18 each coordinate Co(2+). Residues cysteine 15 and cysteine 18 each coordinate Zn(2+). A helical membrane pass occupies residues 87-107 (RNRMVNMLIRMAAAVILGAAA). The Extracellular portion of the chain corresponds to 108–116 (YLVQSGTIE). A helical transmembrane segment spans residues 117-136 (FFLFLGAYLIIGGDIIIRAV). At 137 to 143 (KNIIRGQ) the chain is on the cytoplasmic side. The helical transmembrane segment at 144–163 (VFDEHFLMALATIGAFLIQQ) threads the bilayer. At 164–166 (YPE) the chain is on the extracellular side. The chain crosses the membrane as a helical span at residues 167 to 186 (GVAVMLFYQIGELFQGAAVS). Residues 187-320 (RSRKSISALM…ITKFAKYYTP (134 aa)) are Cytoplasmic-facing. Residues 321 to 339 (AVVIIAVLLAFVPPLVLSG) form a helical membrane-spanning segment. Residues 340–345 (AALSDW) lie on the Extracellular side of the membrane. Residues 346–363 (VYRALIFLVISCPCALVV) form a helical membrane-spanning segment. At 364–648 (SIPLGFFGGI…AIRIAKRTRR (285 aa)) the chain is on the cytoplasmic side. The 4-aspartylphosphate intermediate role is filled by aspartate 401. Mg(2+) is bound by residues aspartate 595 and aspartate 599. A helical membrane pass occupies residues 649-670 (IVWQNIGFALGVKAIFLILGAF). Residues 671–678 (GIATMWEA) are Extracellular-facing. Residues 679–694 (VFSDVGVTLLAVANAM) form a helical membrane-spanning segment. Residues 695 to 702 (RVMRLKNK) lie on the Cytoplasmic side of the membrane.

Belongs to the cation transport ATPase (P-type) (TC 3.A.3) family. Type IB subfamily.

It is found in the cell membrane. The enzyme catalyses Zn(2+)(in) + ATP + H2O = Zn(2+)(out) + ADP + phosphate + H(+). It catalyses the reaction Cd(2+)(in) + ATP + H2O = Cd(2+)(out) + ADP + phosphate + H(+). Its function is as follows. Couples the hydrolysis of ATP with the transport of cadmium, zinc and cobalt out of the cell. Does not seem to transport copper. The polypeptide is Cadmium, zinc and cobalt-transporting ATPase (cadA) (Bacillus subtilis (strain 168)).